The chain runs to 57 residues: MAVPFRRTSKTKKRLRRTHFKLQVPGMVECPNCGEMKLSHRVCKACGSYKGKDVKSN.

The protein belongs to the bacterial ribosomal protein bL32 family.

The protein is Large ribosomal subunit protein bL32 of Bacillus licheniformis (strain ATCC 14580 / DSM 13 / JCM 2505 / CCUG 7422 / NBRC 12200 / NCIMB 9375 / NCTC 10341 / NRRL NRS-1264 / Gibson 46).